Reading from the N-terminus, the 278-residue chain is Envelope glycoprotein L (278 aa).

The first 30 residues, 1–30, serve as a signal peptide directing secretion; that stretch reads MCRRPDCGFSFSPGPVILLWCCLLLPIVSS. Residues 43-256 enclose the gL betaherpesvirus-type domain; that stretch reads VPAECPELTR…DKYYAGLPPE (214 aa). A disulfide bond links Cys-154 and Cys-159.

This sequence belongs to the herpesviridae glycoprotein L (gL) family. Betaherpesvirinae gL subfamily. As to quaternary structure, interacts with glycoprotein H (gH); this interaction is necessary for the correct processing and cell surface expression of gH. Forms the envelope pentamer complex (PC) composed of gH, gL, UL128, UL130, and UL131A. The pentamer interacts with host NRP2. Forms the envelope trimer complex composed of gH, gL, and gO. The trimer interacts with host PDGFRA. The trimer also interacts with host EPHA2.

Its subcellular location is the virion membrane. The protein localises to the host cell membrane. The protein resides in the host Golgi apparatus. It is found in the host trans-Golgi network. The heterodimer glycoprotein H-glycoprotein L is required for the fusion of viral and plasma membranes leading to virus entry into the host cell. Acts as a functional inhibitor of gH and maintains gH in an inhibited form. Upon binding to host integrins, gL dissociates from gH leading to activation of the viral fusion glycoproteins gB and gH. In human cytomegalovirus, forms two distincts complexes to mediate viral entry, a trimer and a pentamer at the surface of the virion envelope. The gH-gL-gO trimer is required for infection in fibroblasts by interacting with host PDGFRA, and in glioblastoma cells by interacting with host EPHA2. The gH-gL-UL128-UL130-UL131A pentamer is essential for viral entry in epithelial, endothelial and myeloid cells via interaction with host NRP2. The protein is Envelope glycoprotein L of Human cytomegalovirus (strain 5160) (HHV-5).